Reading from the N-terminus, the 484-residue chain is Sulfoacetaldehyde dehydrogenase (484 aa).

NAD(+)-binding positions include 105 to 110, Gly188, and Gly206; that span reads LTPVTN. Catalysis depends on Cys239, which acts as the Nucleophile. Residues Glu332 and Leu412 each contribute to the NAD(+) site.

It belongs to the aldehyde dehydrogenase family.

It carries out the reaction sulfoacetaldehyde + NAD(+) + CoA = sulfoacetyl-CoA + NADH + H(+). In terms of biological role, part of a variant of the sulfo-TK pathway, a D-sulfoquinovose degradation pathway that produces sulfoacetate. Catalyzes the oxidation of sulfoacetaldehyde (SA) to sulfoacetyl-coenzyme A (sulfoacetyl-CoA). Is highly specific for NAD(+), with only residual (1%) activity with NADP(+). Cannot use acetaldehyde. The sequence is that of Sulfoacetaldehyde dehydrogenase from Acholeplasma sp.